The following is a 318-amino-acid chain: NADH-ubiquinone oxidoreductase chain 1 (318 aa).

Transmembrane regions (helical) follow at residues 2–22, 70–90, 100–120, 136–156, 172–192, 222–242, 253–273, and 294–314; these read FMIN…FLTL, MFII…SPLP, LGVL…LWSG, VAQT…VLLM, LWLL…TLAE, LFFL…AILF, ELYT…FLWI, and LPLT…TASI.

The protein belongs to the complex I subunit 1 family. In terms of assembly, core subunit of respiratory chain NADH dehydrogenase (Complex I) which is composed of 45 different subunits.

Its subcellular location is the mitochondrion inner membrane. It catalyses the reaction a ubiquinone + NADH + 5 H(+)(in) = a ubiquinol + NAD(+) + 4 H(+)(out). In terms of biological role, core subunit of the mitochondrial membrane respiratory chain NADH dehydrogenase (Complex I) which catalyzes electron transfer from NADH through the respiratory chain, using ubiquinone as an electron acceptor. Essential for the catalytic activity and assembly of complex I. This chain is NADH-ubiquinone oxidoreductase chain 1 (MT-ND1), found in Balaenoptera physalus (Fin whale).